We begin with the raw amino-acid sequence, 102 residues long: UPF0213 protein Ent638_3592 (102 aa).

The GIY-YIG domain maps to 4–79 (VCWFLYLVRT…KQLTKRQKER (76 aa)).

It belongs to the UPF0213 family.

This is UPF0213 protein Ent638_3592 from Enterobacter sp. (strain 638).